We begin with the raw amino-acid sequence, 700 residues long: Mitosis inducer protein blt1 (700 aa).

Composition is skewed to polar residues over residues 1 to 11 and 43 to 53; these read MSKSAFTSKSQ and PRSTALPNLSN. Disordered regions lie at residues 1-53 and 266-293; these read MSKS…NLSN and TNNR…SKDQ. The segment covering 273–284 has biased composition (low complexity); it reads GSDGSNSNFNGG. A coiled-coil region spans residues 496 to 575; sequence SVALDDHNRQ…LNMLQKLSMQ (80 aa). Disordered stretches follow at residues 634–659 and 671–700; these read FSSF…RKPS and SSGS…SSKM. Ser636 is modified (phosphoserine).

Interacts with cdr2, mid1 and sad1.

It is found in the cytoplasm. It localises to the cytoskeleton. Functionally, at the onset of mitosis, forms a medial ring structure before the arrangement of the medial actin ring. Essential for the central positioning of the division septum before the cell divides. In Schizosaccharomyces pombe (strain 972 / ATCC 24843) (Fission yeast), this protein is Mitosis inducer protein blt1 (blt1).